Consider the following 322-residue polypeptide: Protease HtpX homolog (322 aa).

The next 2 helical transmembrane spans lie at 19–39 (ILLILFPCLVAVLTYLFCYLL) and 61–81 (FINLIPYIIGGVLVWFIIAYF). A Zn(2+)-binding site is contributed by His-165. Glu-166 is an active-site residue. His-169 is a Zn(2+) binding site. 2 helical membrane passes run 175-195 (VRLLIISIVFVGIFSMLAQIA) and 216-236 (ILILVLAMIVAAIGYFFATLM). Residue Glu-245 coordinates Zn(2+).

Belongs to the peptidase M48B family. It depends on Zn(2+) as a cofactor.

It localises to the cell inner membrane. This Bacteroides fragilis (strain ATCC 25285 / DSM 2151 / CCUG 4856 / JCM 11019 / LMG 10263 / NCTC 9343 / Onslow / VPI 2553 / EN-2) protein is Protease HtpX homolog.